A 421-amino-acid polypeptide reads, in one-letter code: MVILALNCGSSSVKYQLFDWEKKEVVAKGMVERVIIGDSFIMHEVPGRETYRKEYECPDHKVAIDLIIRTLVDGEHGVLKDINEISAVGHRVVHGGEMFTRSVLIDEKVLDAVKDVQHLAPLHNPPNIAGIEAAQAVLPSVPHVAIFDTAFHQTMPEHAYLYPLPYEWYEKYGVRRYGFHGTSHLFVSKRAAVLLGKKPSDCNIITMHIGNGVSHCAIRGGVSIDTSMGLTPLEGAVMGTRCGDIDPAIPAFMMQKENLSAKEIDSILNKKSGVLGVTGRFTDRRDVIENANNGDHRCKVALEIEAYRLKKYIGTYMAVLGRLDAVVFTAGVGEMGWPIREKTIEGLEGIGIKLDRERNKSAMTRKRETLITTDDSPIKVFVIPTDEELVFTEDVVAILDGTYTDHMNFDYSFARQDFVRS.

Asn7 is a Mg(2+) binding site. Lys14 lines the ATP pocket. Residue Arg91 participates in substrate binding. Asp148 serves as the catalytic Proton donor/acceptor. ATP is bound by residues His208–Gly212 and Asp283–Arg285. Glu387 contributes to the Mg(2+) binding site.

It belongs to the acetokinase family. In terms of assembly, homodimer. Mg(2+) is required as a cofactor. It depends on Mn(2+) as a cofactor.

It localises to the cytoplasm. It carries out the reaction acetate + ATP = acetyl phosphate + ADP. It participates in metabolic intermediate biosynthesis; acetyl-CoA biosynthesis; acetyl-CoA from acetate: step 1/2. In terms of biological role, catalyzes the formation of acetyl phosphate from acetate and ATP. Can also catalyze the reverse reaction. The polypeptide is Acetate kinase (Geobacter metallireducens (strain ATCC 53774 / DSM 7210 / GS-15)).